A 535-amino-acid chain; its full sequence is MESLMRLVLVLFPFFVVFFVPLDHVSSESISRANFPDGFVFGTASSAYQFEGAVKEGNKGESIWDTFTKEKPGKILDFSNADTTVDQYHRFHNDIDLMKDLRMDAYRFSISWSRIFPNGTGEVNPDGVKYYNSLIDALLAKGIKPYVTLYHWDLPQALEDRYEGWLSREVVDDFEHYAFTCFKAFGDRVKYWITFNEPHGVSIQGYDTGIQAPGRCSLLGHWFCKKGKSSVEPYIVAHNILLSHAAAYHTYQRNFKEKQRGQIGISLDAKWYEPMSDCDEDKDAARRAMDFGLGWFMDPLINGDYPASMKSLVEERLPKITPEMYKTIKGAFDYVGINHYTTLYARNDRTRIRKLILQDASSDSAVITSSFRGGVAIGERAGSSWLHIVPWGIRKLAVYVKDIYGNPPVFITENGMDEKNSPFIDMEKALKDDKRIGFHRDYLSNLSAAIRNDECDVRGYFVWSLLDNWEWNSGYTVRFGIYYVDYKNNLTRIPKASARWFQTILSGSSSTSDSSKLILLEEATEQQQEYKFQEK.

Positions 1 to 27 are cleaved as a signal peptide; that stretch reads MESLMRLVLVLFPFFVVFFVPLDHVSS. A beta-D-glucoside is bound at residue Q49. N118 carries N-linked (GlcNAc...) asparagine glycosylation. Residues H151 and 196 to 197 each bind a beta-D-glucoside; that span reads NE. E197 acts as the Proton donor in catalysis. A disulfide bond links C216 and C224. The a beta-D-glucoside site is built by Y340 and E413. E413 serves as the catalytic Nucleophile. N445 is a glycosylation site (N-linked (GlcNAc...) asparagine). Residues W463, 470–471, and F479 each bind a beta-D-glucoside; that span reads EW. N489 carries an N-linked (GlcNAc...) asparagine glycan.

Belongs to the glycosyl hydrolase 1 family.

The enzyme catalyses Hydrolysis of terminal, non-reducing beta-D-glucosyl residues with release of beta-D-glucose.. In Arabidopsis thaliana (Mouse-ear cress), this protein is Putative beta-glucosidase 41.